Reading from the N-terminus, the 1097-residue chain is DNA-directed RNA polymerase subunit beta (1097 aa).

The disordered stretch occupies residues 1073 to 1097 (DINPRRNTPSRPTYESLGTSEYEED). The span at 1077-1091 (RRNTPSRPTYESLGT) shows a compositional bias: polar residues.

It belongs to the RNA polymerase beta chain family. In terms of assembly, in cyanobacteria the RNAP catalytic core is composed of 2 alpha, 1 beta, 1 beta', 1 gamma and 1 omega subunit. When a sigma factor is associated with the core the holoenzyme is formed, which can initiate transcription.

The enzyme catalyses RNA(n) + a ribonucleoside 5'-triphosphate = RNA(n+1) + diphosphate. Its function is as follows. DNA-dependent RNA polymerase catalyzes the transcription of DNA into RNA using the four ribonucleoside triphosphates as substrates. In Prochlorococcus marinus (strain MIT 9312), this protein is DNA-directed RNA polymerase subunit beta.